Here is a 338-residue protein sequence, read N- to C-terminus: Limbic system-associated membrane protein (338 aa).

An N-terminal signal peptide occupies residues 1–28 (MVGRVQPDRKQLPLVLLRLLCLLPTGLP). Ig-like C2-type domains lie at 29–122 (VRSV…PKTS), 132–214 (PKIS…VKVT), and 219–304 (PTIT…ASLV). 2 N-linked (GlcNAc...) asparagine glycosylation sites follow: Asn40 and Asn66. Cys53 and Cys111 are joined by a disulfide. Tyr94 carries the post-translational modification Phosphotyrosine. N-linked (GlcNAc...) asparagine glycosylation is found at Asn136 and Asn148. Cystine bridges form between Cys153–Cys197 and Cys239–Cys290. N-linked (GlcNAc...) asparagine glycosylation is found at Asn279, Asn287, and Asn300. Residue Asn315 is the site of GPI-anchor amidated asparagine; alternate attachment. The N-linked (GlcNAc...) asparagine; alternate glycan is linked to Asn315. Residues 316–338 (GSISLAVPLWLLAASLFCLLSKC) constitute a propeptide, removed in mature form.

It belongs to the immunoglobulin superfamily. IgLON family. Expressed mostly by neurons comprising limbic-associated cortical and subcortical regions that function in cognition, emotion, memory, and learning.

The protein localises to the cell membrane. Its function is as follows. Mediates selective neuronal growth and axon targeting. Contributes to the guidance of developing axons and remodeling of mature circuits in the limbic system. Essential for normal growth of the hippocampal mossy fiber projection. The sequence is that of Limbic system-associated membrane protein (Lsamp) from Rattus norvegicus (Rat).